The primary structure comprises 377 residues: Pseudouridylate synthase RPUSD4, mitochondrial (377 aa).

Residues 1–46 constitute a mitochondrion transit peptide; sequence MAAPCLRTPGVQLLSMSSRPGRLFTPGSWSFCSSATSSRPLNAQRL. The active site involves aspartate 153.

It belongs to the pseudouridine synthase RluA family. In terms of assembly, interacts with 16S mt-rRNA, mt-tRNA(Phe) and mt-tRNA(Met). Forms a regulatory protein-RNA complex, consisting of RCC1L, NGRN, RPUSD3, RPUSD4, TRUB2, FASTKD2 and 16S mt-rRNA.

The protein resides in the mitochondrion matrix. The protein localises to the nucleus. It localises to the cytoplasm. It catalyses the reaction uridine in 5S rRNA = pseudouridine in 5S rRNA. The enzyme catalyses a uridine in tRNA = a pseudouridine in tRNA. The catalysed reaction is a uridine in mRNA = a pseudouridine in mRNA. In terms of biological role, catalyzes uridine to pseudouridine isomerization (pseudouridylation) of different mitochondrial RNA substrates. Acts on position 1397 in 16S mitochondrial ribosomal RNA (16S mt-rRNA). This modification is required for the assembly of 16S mt-rRNA into a functional mitochondrial ribosome. As a component of a functional protein-RNA module, consisting of RCC1L, NGRN, RPUSD3, RPUSD4, TRUB2, FASTKD2 and 16S mt-rRNA, controls 16S mt-rRNA abundance and is required for intra-mitochondrial translation. Acts on position 39 in mitochondrial tRNA(Phe). Also catalyzes pseudouridylation of mRNAs in nucleus: acts as a regulator of pre-mRNA splicing by mediating pseudouridylation of pre-mRNAs at locations associated with alternatively spliced regions. Pseudouridylation of pre-mRNAs near splice sites directly regulates mRNA splicing and mRNA 3'-end processing. The sequence is that of Pseudouridylate synthase RPUSD4, mitochondrial from Mus musculus (Mouse).